Consider the following 409-residue polypeptide: Accessory Sec system protein translocase subunit SecY2 (409 aa).

10 helical membrane-spanning segments follow: residues 16-36, 61-81, 104-124, 132-152, 161-181, 190-210, 242-262, 286-306, 341-361, and 374-394; these read ILIT…PIPG, LSQV…MILL, VVML…FQYH, LLLA…IGNL, MTIL…PLIF, LAII…ITFE, GMAF…IILL, GVVI…FVNI, LFGT…LLFA, and TGIF…FQVI.

This sequence belongs to the SecY/SEC61-alpha family. SecY2 subfamily. Component of the accessory SecA2/SecY2 protein translocase complex required to export cell wall proteins. May form heterotrimers with SecE and SecG subunits.

The protein localises to the cell membrane. Its function is as follows. Part of the accessory SecA2/SecY2 system specifically required for export of possible cell wall proteins. The central subunit of a protein translocation channel. The chain is Accessory Sec system protein translocase subunit SecY2 from Streptococcus agalactiae serotype Ia (strain ATCC 27591 / A909 / CDC SS700).